The sequence spans 639 residues: Extracellular metalloproteinase 1 (639 aa).

The N-terminal stretch at 1-19 is a signal peptide; it reads MHGLLLAAGLISLPLHVLA. Positions 20–250 are excised as a propeptide; that stretch reads HPQPSSTSLA…VHNVVDYVAH (231 aa). The N-linked (GlcNAc...) asparagine glycan is linked to Asn-291. Residue His-434 participates in Zn(2+) binding. Glu-435 is a catalytic residue. Residue His-438 participates in Zn(2+) binding. N-linked (GlcNAc...) asparagine glycosylation occurs at Asn-598.

This sequence belongs to the peptidase M36 family. Zn(2+) is required as a cofactor.

The protein resides in the secreted. Its function is as follows. Secreted metalloproteinase probably acting as a virulence factor. In Arthroderma otae (strain ATCC MYA-4605 / CBS 113480) (Microsporum canis), this protein is Extracellular metalloproteinase 1 (MEP1).